The primary structure comprises 1806 residues: Focadhesin (1806 aa).

The disordered stretch occupies residues 733–760 (ARPIPKQPEVEDEVKQNEEENEEEEDIS).

It is found in the cell junction. It localises to the focal adhesion. Its subcellular location is the cytoplasm. The protein localises to the cytosol. Functionally, required for the maintenance of SKIC2 and SKIC3 proteostatic levels in the liver. May be involved in the regulation of RNA degradation by the exosome complex. This Danio rerio (Zebrafish) protein is Focadhesin (focad).